The following is a 237-amino-acid chain: uncharacterized protein (237 aa).

50-57 serves as a coordination point for ATP; it reads APPGTGKS.

This is an uncharacterized protein from Escherichia coli (strain K12).